A 491-amino-acid chain; its full sequence is UDP-N-acetylmuramate--L-alanine ligase (491 aa).

126-132 (GTHGKTT) lines the ATP pocket.

It belongs to the MurCDEF family.

Its subcellular location is the cytoplasm. The catalysed reaction is UDP-N-acetyl-alpha-D-muramate + L-alanine + ATP = UDP-N-acetyl-alpha-D-muramoyl-L-alanine + ADP + phosphate + H(+). Its pathway is cell wall biogenesis; peptidoglycan biosynthesis. Cell wall formation. The sequence is that of UDP-N-acetylmuramate--L-alanine ligase from Salmonella typhimurium (strain LT2 / SGSC1412 / ATCC 700720).